The primary structure comprises 322 residues: NADH-quinone oxidoreductase subunit H (322 aa).

A run of 9 helical transmembrane segments spans residues 15 to 35 (FFKVIFILLLIVFSSAMLSIV), 50 to 69 (NRVGWMGSLQLCADMIKILF), 81 to 101 (FIFVLSPVIAFTSLLCVIPII), 114 to 134 (IGILFFLMMASLSVYAILFAG), 149 to 169 (ACVQTLSYEVFLGLSLMGVVA), 186 to 206 (IWNVFPQFFGFLTFLIAGLAV), 237 to 257 (FFIGEYISIITVSSLIVTLFF), 265 to 285 (IPGCIWFILKIIFFIFLFILI), and 302 to 322 (WKFCLPLTLFNLFLTAFLILV).

Belongs to the complex I subunit 1 family. NDH-1 is composed of 13 different subunits. Subunits NuoA, H, J, K, L, M, N constitute the membrane sector of the complex.

The protein resides in the cell membrane. The catalysed reaction is a quinone + NADH + 5 H(+)(in) = a quinol + NAD(+) + 4 H(+)(out). Functionally, NDH-1 shuttles electrons from NADH, via FMN and iron-sulfur (Fe-S) centers, to quinones in the respiratory chain. The immediate electron acceptor for the enzyme in this species is believed to be ubiquinone. Couples the redox reaction to proton translocation (for every two electrons transferred, four hydrogen ions are translocated across the cytoplasmic membrane), and thus conserves the redox energy in a proton gradient. This subunit may bind ubiquinone. The protein is NADH-quinone oxidoreductase subunit H of Buchnera aphidicola subsp. Acyrthosiphon pisum (strain 5A).